We begin with the raw amino-acid sequence, 58 residues long: Small ribosomal subunit protein bS21 (58 aa).

The protein belongs to the bacterial ribosomal protein bS21 family.

This Synechococcus sp. (strain CC9605) protein is Small ribosomal subunit protein bS21.